The chain runs to 205 residues: Urease accessory protein UreE (205 aa).

The disordered stretch occupies residues 171–205; sequence AHEAHPHAHSHAGGHGHVHSGHGHGGKHGEHDAES. Residues 177 to 196 show a composition bias toward basic residues; the sequence is HAHSHAGGHGHVHSGHGHGG.

Belongs to the UreE family.

The protein localises to the cytoplasm. Functionally, involved in urease metallocenter assembly. Binds nickel. Probably functions as a nickel donor during metallocenter assembly. This Bordetella parapertussis (strain 12822 / ATCC BAA-587 / NCTC 13253) protein is Urease accessory protein UreE.